A 270-amino-acid polypeptide reads, in one-letter code: uncharacterized protein (270 aa).

At Met-1–His-37 the chain is on the cytoplasmic side. The chain crosses the membrane as a helical span at residues Phe-38 to Ile-58. Topologically, residues Asn-59 to Thr-65 are extracellular. Residues Phe-66–Met-86 traverse the membrane as a helical segment. The Cytoplasmic portion of the chain corresponds to Leu-87–Arg-93. A helical membrane pass occupies residues Leu-94–Val-114. At Ala-115–Arg-140 the chain is on the extracellular side. A helical transmembrane segment spans residues Ile-141 to Gln-161. Residues Leu-162–Glu-181 lie on the Cytoplasmic side of the membrane. The helical transmembrane segment at Trp-182–Val-202 threads the bilayer. Residues Arg-203–Trp-220 lie on the Extracellular side of the membrane. A helical membrane pass occupies residues Cys-221–Phe-241. Residues Arg-242–Asp-270 lie on the Cytoplasmic side of the membrane.

It belongs to the lipid-translocating exporter (LTE) (TC 9.A.26.1) family.

Its subcellular location is the membrane. This is an uncharacterized protein from Saccharomyces cerevisiae (strain ATCC 204508 / S288c) (Baker's yeast).